The following is a 632-amino-acid chain: Probable potassium transport system protein Kup (632 aa).

12 consecutive transmembrane segments (helical) span residues 20 to 40 (LLVA…LYTL), 60 to 80 (ILSL…VMFI), 111 to 131 (LMVI…MITP), 146 to 166 (FDGI…ALFL), 178 to 198 (LFGP…VHGI), 216 to 236 (FFIV…LALT), 257 to 277 (WFAL…AILL), 289 to 309 (LLAP…ATVI), 347 to 367 (IYIA…VIGF), 379 to 399 (VAVT…MLLL), 404 to 424 (PVLA…FFAA), and 429 to 449 (IVQG…LMST).

It belongs to the HAK/KUP transporter (TC 2.A.72) family.

Its subcellular location is the cell inner membrane. It carries out the reaction K(+)(in) + H(+)(in) = K(+)(out) + H(+)(out). Functionally, transport of potassium into the cell. Likely operates as a K(+):H(+) symporter. The sequence is that of Probable potassium transport system protein Kup from Pseudomonas putida (strain W619).